A 386-amino-acid chain; its full sequence is NADH-ubiquinone oxidoreductase 49 kDa subunit homolog (386 aa).

Belongs to the complex I 49 kDa subunit family.

The protein localises to the mitochondrion. It catalyses the reaction a ubiquinone + NADH + 5 H(+)(in) = a ubiquinol + NAD(+) + 4 H(+)(out). Core subunit of the mitochondrial membrane respiratory chain NADH dehydrogenase (Complex I) that is believed to belong to the minimal assembly required for catalysis. Complex I functions in the transfer of electrons from NADH to the respiratory chain. The immediate electron acceptor for the enzyme is believed to be ubiquinone. Component of the iron-sulfur (IP) fragment of the enzyme. Component of the iron-sulfur (IP) fragment of the enzyme. This Trypanosoma brucei brucei protein is NADH-ubiquinone oxidoreductase 49 kDa subunit homolog (NAD7).